A 586-amino-acid polypeptide reads, in one-letter code: Phosphomethylpyrimidine synthase (586 aa).

The interval 1-58 is disordered; sequence MKQSVSAEQIELKSSLPGSKKVYVDGPREGMKVPMREIEQSDTNGVPNPPIRVYDTSG. Positions 22–39 are enriched in basic and acidic residues; it reads VYVDGPREGMKVPMREIE. Substrate contacts are provided by residues Asn193, Met222, Tyr251, His287, 307–309, 348–351, and Glu387; these read SRG and DGLR. Position 391 (His391) interacts with Zn(2+). Tyr414 serves as a coordination point for substrate. His455 serves as a coordination point for Zn(2+). Residues Cys535, Cys538, and Cys543 each coordinate [4Fe-4S] cluster.

Belongs to the ThiC family. [4Fe-4S] cluster serves as cofactor.

It carries out the reaction 5-amino-1-(5-phospho-beta-D-ribosyl)imidazole + S-adenosyl-L-methionine = 4-amino-2-methyl-5-(phosphooxymethyl)pyrimidine + CO + 5'-deoxyadenosine + formate + L-methionine + 3 H(+). It participates in cofactor biosynthesis; thiamine diphosphate biosynthesis. Its function is as follows. Catalyzes the synthesis of the hydroxymethylpyrimidine phosphate (HMP-P) moiety of thiamine from aminoimidazole ribotide (AIR) in a radical S-adenosyl-L-methionine (SAM)-dependent reaction. This chain is Phosphomethylpyrimidine synthase, found in Bacillus anthracis (strain A0248).